A 335-amino-acid chain; its full sequence is Ig gamma-2A chain C region secreted form (335 aa).

3 consecutive Ig-like domains span residues 6–98, 126–225, and 234–330; these read PSVY…KKIE, PSVF…KTIS, and PQVY…KTIS. Asn185 carries an N-linked (GlcNAc...) asparagine glycan.

It localises to the secreted. The polypeptide is Ig gamma-2A chain C region secreted form (Mus musculus (Mouse)).